The primary structure comprises 31 residues: Cytochrome b6-f complex subunit 6 (31 aa).

A helical transmembrane segment spans residues 4–26 (ITSYFGFLLAASTITPALFIGLS).

It belongs to the PetL family. In terms of assembly, the 4 large subunits of the cytochrome b6-f complex are cytochrome b6, subunit IV (17 kDa polypeptide, PetD), cytochrome f and the Rieske protein, while the 4 small subunits are PetG, PetL, PetM and PetN. The complex functions as a dimer.

It is found in the plastid. Its subcellular location is the chloroplast thylakoid membrane. In terms of biological role, component of the cytochrome b6-f complex, which mediates electron transfer between photosystem II (PSII) and photosystem I (PSI), cyclic electron flow around PSI, and state transitions. PetL is important for photoautotrophic growth as well as for electron transfer efficiency and stability of the cytochrome b6-f complex. The sequence is that of Cytochrome b6-f complex subunit 6 from Buxus microphylla (Littleleaf boxwood).